We begin with the raw amino-acid sequence, 285 residues long: Pantothenate synthetase (285 aa).

30–37 serves as a coordination point for ATP; that stretch reads MGFLHEGH. His37 acts as the Proton donor in catalysis. (R)-pantoate is bound at residue Gln61. Residue Gln61 coordinates beta-alanine. An ATP-binding site is contributed by 147–150; the sequence is GQKD. Gln153 provides a ligand contact to (R)-pantoate. Residues Val176 and 184-187 each bind ATP; that span reads KSSR.

The protein belongs to the pantothenate synthetase family. As to quaternary structure, homodimer.

It localises to the cytoplasm. It catalyses the reaction (R)-pantoate + beta-alanine + ATP = (R)-pantothenate + AMP + diphosphate + H(+). It participates in cofactor biosynthesis; (R)-pantothenate biosynthesis; (R)-pantothenate from (R)-pantoate and beta-alanine: step 1/1. Functionally, catalyzes the condensation of pantoate with beta-alanine in an ATP-dependent reaction via a pantoyl-adenylate intermediate. This chain is Pantothenate synthetase, found in Listeria monocytogenes serotype 4b (strain F2365).